The primary structure comprises 102 residues: Flagellar hook-basal body complex protein FliE (102 aa).

Belongs to the FliE family.

The protein localises to the bacterial flagellum basal body. The polypeptide is Flagellar hook-basal body complex protein FliE (Oceanobacillus iheyensis (strain DSM 14371 / CIP 107618 / JCM 11309 / KCTC 3954 / HTE831)).